The primary structure comprises 693 residues: Elongation factor G (693 aa).

Residues 8-282 (EKTRNIGIMA…AVIDYLPSPL (275 aa)) form the tr-type G domain. Residues 17-24 (AHVDAGKT), 81-85 (DTPGH), and 135-138 (NKMD) contribute to the GTP site.

It belongs to the TRAFAC class translation factor GTPase superfamily. Classic translation factor GTPase family. EF-G/EF-2 subfamily.

It is found in the cytoplasm. Its function is as follows. Catalyzes the GTP-dependent ribosomal translocation step during translation elongation. During this step, the ribosome changes from the pre-translocational (PRE) to the post-translocational (POST) state as the newly formed A-site-bound peptidyl-tRNA and P-site-bound deacylated tRNA move to the P and E sites, respectively. Catalyzes the coordinated movement of the two tRNA molecules, the mRNA and conformational changes in the ribosome. This is Elongation factor G from Streptococcus suis (strain 05ZYH33).